The chain runs to 146 residues: Transcriptional regulator MraZ (146 aa).

2 SpoVT-AbrB domains span residues 5 to 50 (SSFH…TFNE) and 77 to 120 (ACEC…SREQ).

It belongs to the MraZ family. In terms of assembly, forms oligomers.

It localises to the cytoplasm. The protein resides in the nucleoid. This Desulforapulum autotrophicum (strain ATCC 43914 / DSM 3382 / VKM B-1955 / HRM2) (Desulfobacterium autotrophicum) protein is Transcriptional regulator MraZ.